The sequence spans 432 residues: Adenylosuccinate synthetase (432 aa).

Residues 12-18 (GDEGKGK) and 40-42 (GHT) each bind GTP. The active-site Proton acceptor is aspartate 13. Mg(2+) contacts are provided by aspartate 13 and glycine 40. IMP contacts are provided by residues 13–16 (DEGK), 38–41 (NAGH), threonine 129, arginine 143, glutamine 224, threonine 239, and arginine 303. Catalysis depends on histidine 41, which acts as the Proton donor. 299-305 (VTTGRRR) serves as a coordination point for substrate. GTP-binding positions include arginine 305, 331–333 (KLD), and 413–415 (GVG).

This sequence belongs to the adenylosuccinate synthetase family. Homodimer. Mg(2+) serves as cofactor.

The protein localises to the cytoplasm. The enzyme catalyses IMP + L-aspartate + GTP = N(6)-(1,2-dicarboxyethyl)-AMP + GDP + phosphate + 2 H(+). It participates in purine metabolism; AMP biosynthesis via de novo pathway; AMP from IMP: step 1/2. Functionally, plays an important role in the de novo pathway of purine nucleotide biosynthesis. Catalyzes the first committed step in the biosynthesis of AMP from IMP. The protein is Adenylosuccinate synthetase of Mycobacterium avium (strain 104).